We begin with the raw amino-acid sequence, 240 residues long: Ribosomal RNA small subunit methyltransferase G (240 aa).

Residues G78, F83, 129–130, and R147 each bind S-adenosyl-L-methionine; that span reads AE. Residues 218–240 form a disordered region; sequence RRQTSKKYPRKPGTPNKSPLLEN.

This sequence belongs to the methyltransferase superfamily. RNA methyltransferase RsmG family.

Its subcellular location is the cytoplasm. Specifically methylates the N7 position of guanine in position 535 of 16S rRNA. The protein is Ribosomal RNA small subunit methyltransferase G of Staphylococcus haemolyticus (strain JCSC1435).